Consider the following 212-residue polypeptide: Probable GTP-binding protein EngB (212 aa).

The EngB-type G domain maps to 38-210; that stretch reads SLPEIAFVGK…KASLAKCIKF (173 aa). GTP is bound by residues 46–53, 73–77, 91–94, 158–161, and 189–191; these read GKSNVGKS, GRTRQ, DLPG, TKSD, and VSN. The Mg(2+) site is built by serine 53 and threonine 75.

Belongs to the TRAFAC class TrmE-Era-EngA-EngB-Septin-like GTPase superfamily. EngB GTPase family. It depends on Mg(2+) as a cofactor.

In terms of biological role, necessary for normal cell division and for the maintenance of normal septation. In Rickettsia rickettsii (strain Sheila Smith), this protein is Probable GTP-binding protein EngB.